The following is a 97-amino-acid chain: Putative membrane protein insertion efficiency factor (97 aa).

Belongs to the UPF0161 family.

Its subcellular location is the cell membrane. In terms of biological role, could be involved in insertion of integral membrane proteins into the membrane. The polypeptide is Putative membrane protein insertion efficiency factor (Lactobacillus helveticus (strain DPC 4571)).